The primary structure comprises 430 residues: Adenylosuccinate synthetase (430 aa).

GTP contacts are provided by residues 12–18 and 40–42; these read GDEGKGK and GHT. Catalysis depends on aspartate 13, which acts as the Proton acceptor. 2 residues coordinate Mg(2+): aspartate 13 and glycine 40. IMP contacts are provided by residues 13-16, 38-41, threonine 128, arginine 142, glutamine 223, threonine 238, and arginine 302; these read DEGK and NAGH. The Proton donor role is filled by histidine 41. 298-304 contacts substrate; it reads TTTGRPR. GTP contacts are provided by residues arginine 304, 330 to 332, and 412 to 414; these read SID and SVG.

Belongs to the adenylosuccinate synthetase family. In terms of assembly, homodimer. Mg(2+) serves as cofactor.

It is found in the cytoplasm. The enzyme catalyses IMP + L-aspartate + GTP = N(6)-(1,2-dicarboxyethyl)-AMP + GDP + phosphate + 2 H(+). Its pathway is purine metabolism; AMP biosynthesis via de novo pathway; AMP from IMP: step 1/2. Its function is as follows. Plays an important role in the de novo pathway of purine nucleotide biosynthesis. Catalyzes the first committed step in the biosynthesis of AMP from IMP. This Streptococcus sanguinis (strain SK36) protein is Adenylosuccinate synthetase.